A 431-amino-acid polypeptide reads, in one-letter code: Enolase (431 aa).

Glutamine 167 contributes to the (2R)-2-phosphoglycerate binding site. Residue glutamate 209 is the Proton donor of the active site. Residues aspartate 246, glutamate 290, and aspartate 316 each coordinate Mg(2+). 4 residues coordinate (2R)-2-phosphoglycerate: lysine 341, arginine 370, serine 371, and lysine 392. The Proton acceptor role is filled by lysine 341.

It belongs to the enolase family. As to quaternary structure, component of the RNA degradosome, a multiprotein complex involved in RNA processing and mRNA degradation. Requires Mg(2+) as cofactor.

The protein resides in the cytoplasm. Its subcellular location is the secreted. It localises to the cell surface. The catalysed reaction is (2R)-2-phosphoglycerate = phosphoenolpyruvate + H2O. It functions in the pathway carbohydrate degradation; glycolysis; pyruvate from D-glyceraldehyde 3-phosphate: step 4/5. Catalyzes the reversible conversion of 2-phosphoglycerate (2-PG) into phosphoenolpyruvate (PEP). It is essential for the degradation of carbohydrates via glycolysis. This Shigella flexneri serotype 5b (strain 8401) protein is Enolase.